Here is a 327-residue protein sequence, read N- to C-terminus: GMP reductase (327 aa).

The active-site Thioimidate intermediate is the Cys-175. Residue 204 to 227 (IIADGGIRTHGDIAKSIRFGASMV) coordinates NADP(+).

This sequence belongs to the IMPDH/GMPR family. GuaC type 2 subfamily.

It catalyses the reaction IMP + NH4(+) + NADP(+) = GMP + NADPH + 2 H(+). Catalyzes the irreversible NADPH-dependent deamination of GMP to IMP. It functions in the conversion of nucleobase, nucleoside and nucleotide derivatives of G to A nucleotides, and in maintaining the intracellular balance of A and G nucleotides. The protein is GMP reductase of Oceanobacillus iheyensis (strain DSM 14371 / CIP 107618 / JCM 11309 / KCTC 3954 / HTE831).